Consider the following 382-residue polypeptide: tRNA-specific 2-thiouridylase MnmA (382 aa).

ATP is bound by residues Ala-18 to Ser-25 and Leu-44. Cys-112 functions as the Nucleophile in the catalytic mechanism. A disulfide bridge links Cys-112 with Cys-209. Gly-136 contacts ATP. Positions Arg-159–Gln-161 are interaction with tRNA. Residue Cys-209 is the Cysteine persulfide intermediate of the active site.

The protein belongs to the MnmA/TRMU family.

The protein resides in the cytoplasm. It catalyses the reaction S-sulfanyl-L-cysteinyl-[protein] + uridine(34) in tRNA + AH2 + ATP = 2-thiouridine(34) in tRNA + L-cysteinyl-[protein] + A + AMP + diphosphate + H(+). Catalyzes the 2-thiolation of uridine at the wobble position (U34) of tRNA, leading to the formation of s(2)U34. The protein is tRNA-specific 2-thiouridylase MnmA of Methylobacterium nodulans (strain LMG 21967 / CNCM I-2342 / ORS 2060).